The chain runs to 184 residues: MPNTQSPYIAFAMLLSSNGHPVTPAELHGLLIGRSCAGAGFDADAWLADAAQLLETEPGDTVRNALVGLQEMVKAELTGEDVAIVLLLPSDDAALADRAAALGQWCQGFITGFGLNAGGKDLSTDAKEVLQDLVAISQVQEALEESEDGENDYMEVMEYLRVAPLLLYTELAKPEAPATKPSLH.

This sequence belongs to the UPF0149 family.

The chain is UPF0149 protein PSEEN5316 from Pseudomonas entomophila (strain L48).